The following is a 352-amino-acid chain: Mas-related G-protein coupled receptor member X2 (352 aa).

Over 1-45 the chain is Extracellular; the sequence is MEERNISGRDLRVDSNITYWGTNITAVNESNHTGMSFCEVVSCTM. 5 N-linked (GlcNAc...) asparagine glycosylation sites follow: N5, N16, N23, N28, and N31. A helical membrane pass occupies residues 46–66; it reads VFLSLIVALVGLVGNATVLWF. The Cytoplasmic portion of the chain corresponds to 67-75; sequence LGFQMRRNA. The chain crosses the membrane as a helical span at residues 76–96; that stretch reads FSVYILNLAGADFLFICFQIG. The Extracellular segment spans residues 97-107; sequence YCFHMILDIDS. The chain crosses the membrane as a helical span at residues 108-128; sequence IPIEIDLFYLVVLNFPYFCGL. The Cytoplasmic portion of the chain corresponds to 129–155; that stretch reads SILSAISIERCLSVMWPIWYHCQRPRH. A helical transmembrane segment spans residues 156–176; that stretch reads TSAVICTLLWVLSLVCSLLEG. Residues 177–195 lie on the Extracellular side of the membrane; it reads KECGFLYYTSDPGWCKTFD. A helical membrane pass occupies residues 196–216; that stretch reads LITATWLIVLFVALLGSSLAL. At 217 to 239 the chain is on the cytoplasmic side; the sequence is VITIFWGLHKIPVTRLYVAIVFT. Residues 240 to 260 traverse the membrane as a helical segment; sequence VLVFLLFGLPYGIYWFLLVWI. Over 261-275 the chain is Extracellular; the sequence is EKFYYVLPCSIYPVT. The helical transmembrane segment at 276 to 296 threads the bilayer; it reads VFLSCVNSSAKPIIYCLVGSI. Residues 297 to 347 lie on the Cytoplasmic side of the membrane; the sequence is RHHRFQRKTLKLFLQRAMQDTPEEEECGEMGSSGRSREIKTIWKGLRAALI.

Belongs to the G-protein coupled receptor 1 family. Mas subfamily.

The protein resides in the cell membrane. In terms of biological role, orphan receptor. Probably involved in the function of nociceptive neurons. May regulate nociceptor function and/or development, including the sensation or modulation of pain. The polypeptide is Mas-related G-protein coupled receptor member X2 (Mrgprx2) (Mus musculus (Mouse)).